The sequence spans 614 residues: Probable indole-3-acetic acid-amido synthetase GH3.2 (614 aa).

The protein belongs to the IAA-amido conjugating enzyme family. Expressed in roots, flowers and callus.

May catalyze the synthesis of indole-3-acetic acid (IAA)-amino acid conjugates, providing a mechanism for the plant to cope with the presence of excess auxin. This Oryza sativa subsp. japonica (Rice) protein is Probable indole-3-acetic acid-amido synthetase GH3.2 (GH3.2).